A 157-amino-acid chain; its full sequence is MQTVHYLSRMCYTKLLMDSTRPLTVQQLSDKLTVPVVDLLLPCRFCSRFLTYLELREFDYKHLQLIWTEEDFVFACCSGCAYASAQFEIQQFYQLTVYGREIEQEEQRPIGQICIRCQYCLKSLDLIEKLDICSFNQPFHKVRNHWKGRCRHCKEIE.

Zinc fingers lie at residues 43-80 (CRFC…CSGC) and 117-153 (CQYC…CRHC).

It belongs to the papillomaviridae E6 protein family. Forms homodimers. Interacts with ubiquitin-protein ligase UBE3A/E6-AP; this interaction stimulates UBE3A ubiquitin activity. Interacts with host BAK1.

The protein localises to the host cytoplasm. Its subcellular location is the host nucleus. In terms of biological role, plays a major role in the induction and maintenance of cellular transformation. E6 associates with host UBE3A/E6-AP ubiquitin-protein ligase and modulates its activity. Protects host keratinocytes from apoptosis by mediating the degradation of host BAK1. May also inhibit host immune response. The sequence is that of Protein E6 from Human papillomavirus 23.